The following is a 347-amino-acid chain: E3 ubiquitin-protein ligase RNF146-B (347 aa).

The segment at 37–75 (CAICLQTCVHPVSLPCKHVFCYLCVKGASWLGKRCALCR) adopts an RING-type zinc-finger fold. Residues Lys85, Lys95, Lys131, and Lys176 each participate in a glycyl lysine isopeptide (Lys-Gly) (interchain with G-Cter in ubiquitin) cross-link. The 77-residue stretch at 92–168 (EELKAASRGN…EHGRRRKIKR (77 aa)) folds into the WWE domain. Disordered regions lie at residues 196-241 (SSAD…GTSL) and 257-347 (ERSH…VTEV). Over residues 203–217 (SVPAQSGASVQSSSV) the composition is skewed to low complexity. Acidic residues predominate over residues 282–296 (SIEETESDASSDSED). A phosphoserine mark is found at Ser288 and Ser292. Residues 304–322 (HSLTQQRLLVPNPSQTVSD) are compositionally biased toward polar residues.

In terms of assembly, interacts with poly-ADP-ribosylated AXIN1, AXIN2, BLZF1 and CASC3. In terms of processing, ubiquitinated; autoubiquitinated. Autoubiquitination is enhanced upon poly(ADP-ribose)-binding.

Its subcellular location is the cytoplasm. The protein localises to the cytosol. The enzyme catalyses S-ubiquitinyl-[E2 ubiquitin-conjugating enzyme]-L-cysteine + [acceptor protein]-L-lysine = [E2 ubiquitin-conjugating enzyme]-L-cysteine + N(6)-ubiquitinyl-[acceptor protein]-L-lysine.. Its pathway is protein modification; protein ubiquitination. E3 ubiquitin-protein ligase that specifically binds poly-ADP-ribosylated proteins and mediates their ubiquitination and subsequent degradation. Acts as an activator of the Wnt signaling pathway by mediating the ubiquitination of poly-ADP-ribosylated AXIN1 and AXIN2, 2 key components of the beta-catenin destruction complex. Acts in cooperation with tankyrase proteins (TNKS and TNKS2), which mediate poly-ADP-ribosylation of target proteins AXIN1, AXIN2, BLZF1, CASC3, TNKS and TNKS2. Recognizes and binds tankyrase-dependent poly-ADP-ribosylated proteins via its WWE domain and mediates their ubiquitination. This chain is E3 ubiquitin-protein ligase RNF146-B (RNF146B), found in Bos taurus (Bovine).